The primary structure comprises 213 residues: Ribonuclease HII (213 aa).

Residues 25-213 form the RNase H type-2 domain; it reads KTLCGVDEAG…FKPVKQLLPH (189 aa). A divalent metal cation-binding residues include Asp-31, Glu-32, and Asp-124.

Belongs to the RNase HII family. Mn(2+) is required as a cofactor. Requires Mg(2+) as cofactor.

It is found in the cytoplasm. The catalysed reaction is Endonucleolytic cleavage to 5'-phosphomonoester.. In terms of biological role, endonuclease that specifically degrades the RNA of RNA-DNA hybrids. In Magnetococcus marinus (strain ATCC BAA-1437 / JCM 17883 / MC-1), this protein is Ribonuclease HII.